The sequence spans 567 residues: MASEQSSPEINADNLNSSAADVHVQPPGEKEWSDGFYDKEVINGNTPDAPKRGFLGYLIIYLLCYPVSFGGFLPGWDSGITAGFINMDNFKMNFGSYKHSTGEYYLSNVRMGLLVAMFSVGCSIGGVAFARLADTLGRRLAIVIVVLVYMVGAIIQISSNHKWYQYFVGKIIYGLGAGGCSVLCPMLLSEIAPTDLRGGLVSLYQLNMTFGIFLGYCSVYGTRKYSNTAQWRIPVGLCFLWALIIIVGMLLVPESPRYLIECERHEEACVSIAKINKVSPEDPWVLKQADEINAGVLAQRELGEASWKELFSVKTKVLQRLITGILVQTFLQLTGENYFFFYGTTIFKSVGLTDGFETSIVLGTVNFFSTIIAVMVVDKIGRRKCLLFGAASMMACMVIFASIGVKCLYPHGQDGPSSKGAGNAMIVFTCFYIFCFATTWAPVAYIVVAESFPSKVKSKAMSISTAFNWLWQFLIGFFTPFITGSIHFYYGYVFVGCLVAMFLYVFFFLPETIGLSLEEIQLLYEEGIKPWKSASWVPPSRRGASSRETEAKKKSWKEVLKFPKSFN.

Polar residues predominate over residues 1–19 (MASEQSSPEINADNLNSSA). The segment at 1–32 (MASEQSSPEINADNLNSSAADVHVQPPGEKEW) is disordered. Residues 1–55 (MASEQSSPEINADNLNSSAADVHVQPPGEKEWSDGFYDKEVINGNTPDAPKRGFL) lie on the Cytoplasmic side of the membrane. Residues 56–76 (GYLIIYLLCYPVSFGGFLPGW) form a helical membrane-spanning segment. Topologically, residues 77 to 112 (DSGITAGFINMDNFKMNFGSYKHSTGEYYLSNVRMG) are extracellular. The helical transmembrane segment at 113–133 (LLVAMFSVGCSIGGVAFARLA) threads the bilayer. At 134-139 (DTLGRR) the chain is on the cytoplasmic side. Residues 140–160 (LAIVIVVLVYMVGAIIQISSN) form a helical membrane-spanning segment. The Extracellular portion of the chain corresponds to 161–170 (HKWYQYFVGK). Residues 171-191 (IIYGLGAGGCSVLCPMLLSEI) form a helical membrane-spanning segment. Residues 192–197 (APTDLR) are Cytoplasmic-facing. A helical transmembrane segment spans residues 198-218 (GGLVSLYQLNMTFGIFLGYCS). Residues 219–232 (VYGTRKYSNTAQWR) are Extracellular-facing. Residues 233–253 (IPVGLCFLWALIIIVGMLLVP) traverse the membrane as a helical segment. Residues 254-336 (ESPRYLIECE…VQTFLQLTGE (83 aa)) lie on the Cytoplasmic side of the membrane. Residues 337-353 (NYFFFYGTTIFKSVGLT) traverse the membrane as a helical segment. At 354–359 (DGFETS) the chain is on the extracellular side. The chain crosses the membrane as a helical span at residues 360-377 (IVLGTVNFFSTIIAVMVV). Residues 378 to 384 (DKIGRRK) lie on the Cytoplasmic side of the membrane. A helical membrane pass occupies residues 385–405 (CLLFGAASMMACMVIFASIGV). Residues 406 to 427 (KCLYPHGQDGPSSKGAGNAMIV) lie on the Extracellular side of the membrane. Residues 428–448 (FTCFYIFCFATTWAPVAYIVV) traverse the membrane as a helical segment. Over 449-465 (AESFPSKVKSKAMSIST) the chain is Cytoplasmic. The helical transmembrane segment at 466 to 486 (AFNWLWQFLIGFFTPFITGSI) threads the bilayer. Position 487 (histidine 487) is a topological domain, extracellular. A helical transmembrane segment spans residues 488–508 (FYYGYVFVGCLVAMFLYVFFF). The Cytoplasmic segment spans residues 509–567 (LPETIGLSLEEIQLLYEEGIKPWKSASWVPPSRRGASSRETEAKKKSWKEVLKFPKSFN). The segment at 533–555 (SASWVPPSRRGASSRETEAKKKS) is disordered. Residues 545 to 555 (SSRETEAKKKS) are compositionally biased toward basic and acidic residues.

It belongs to the major facilitator superfamily. Sugar transporter (TC 2.A.1.1) family.

The protein localises to the membrane. Probable glucose transporter. The protein is Hexose transporter HXT15 (HXT15) of Saccharomyces cerevisiae (strain ATCC 204508 / S288c) (Baker's yeast).